Reading from the N-terminus, the 1030-residue chain is Importin beta-like SAD2 homolog (1030 aa).

Position 1 is an N-acetylmethionine (methionine 1). In terms of domain architecture, Importin N-terminal spans 25–99; that stretch reads AEQSLNQLQH…RNQILVFVSQ (75 aa). Disordered stretches follow at residues 886–928 and 940–964; these read AAKA…GSTL and SYSD…PIDE. Composition is skewed to acidic residues over residues 890 to 924 and 943 to 964; these read EEEE…DETD and DDDD…PIDE.

It belongs to the importin beta family.

It is found in the cytoplasm. The protein resides in the nucleus. In terms of biological role, functions probably in nuclear protein import, either by acting as autonomous nuclear transport receptor or as an adapter-like protein in association with other importin subunits. The protein is Importin beta-like SAD2 homolog of Arabidopsis thaliana (Mouse-ear cress).